Here is a 195-residue protein sequence, read N- to C-terminus: NADH-ubiquinone oxidoreductase subunit 9 (195 aa).

This sequence belongs to the complex I 30 kDa subunit family. In terms of assembly, complex I is composed of about 30 different subunits.

The protein localises to the mitochondrion inner membrane. The enzyme catalyses a ubiquinone + NADH + 5 H(+)(in) = a ubiquinol + NAD(+) + 4 H(+)(out). Its function is as follows. Core subunit of the mitochondrial membrane respiratory chain NADH dehydrogenase (Complex I) that is believed to belong to the minimal assembly required for catalysis. Complex I functions in the transfer of electrons from NADH to the respiratory chain. The immediate electron acceptor for the enzyme is believed to be ubiquinone. The sequence is that of NADH-ubiquinone oxidoreductase subunit 9 (NAD9) from Acanthamoeba castellanii (Amoeba).